Here is a 184-residue protein sequence, read N- to C-terminus: Protein CPn_0803/CP_1068/CPj0803/CpB0832 (184 aa).

Belongs to the chlamydial CPn_0803/CT_584/TC_0873 family.

In Chlamydia pneumoniae (Chlamydophila pneumoniae), this protein is Protein CPn_0803/CP_1068/CPj0803/CpB0832.